A 494-amino-acid polypeptide reads, in one-letter code: UDP-N-acetylmuramate--L-alanine ligase (494 aa).

140–146 (GTHGKTT) lines the ATP pocket.

Belongs to the MurCDEF family.

The protein resides in the cytoplasm. It carries out the reaction UDP-N-acetyl-alpha-D-muramate + L-alanine + ATP = UDP-N-acetyl-alpha-D-muramoyl-L-alanine + ADP + phosphate + H(+). Its pathway is cell wall biogenesis; peptidoglycan biosynthesis. In terms of biological role, cell wall formation. In Trichormus variabilis (strain ATCC 29413 / PCC 7937) (Anabaena variabilis), this protein is UDP-N-acetylmuramate--L-alanine ligase.